We begin with the raw amino-acid sequence, 294 residues long: Bifunctional protein FolD (294 aa).

NADP(+)-binding positions include 166–168 (GRS), S191, and I232.

Belongs to the tetrahydrofolate dehydrogenase/cyclohydrolase family. As to quaternary structure, homodimer.

It catalyses the reaction (6R)-5,10-methylene-5,6,7,8-tetrahydrofolate + NADP(+) = (6R)-5,10-methenyltetrahydrofolate + NADPH. The enzyme catalyses (6R)-5,10-methenyltetrahydrofolate + H2O = (6R)-10-formyltetrahydrofolate + H(+). It participates in one-carbon metabolism; tetrahydrofolate interconversion. Catalyzes the oxidation of 5,10-methylenetetrahydrofolate to 5,10-methenyltetrahydrofolate and then the hydrolysis of 5,10-methenyltetrahydrofolate to 10-formyltetrahydrofolate. This Bradyrhizobium sp. (strain ORS 278) protein is Bifunctional protein FolD.